The chain runs to 326 residues: tRNA-modifying protein YgfZ (326 aa).

2 residues coordinate folate: W27 and W189.

Belongs to the tRNA-modifying YgfZ family.

It localises to the cytoplasm. Functionally, folate-binding protein involved in regulating the level of ATP-DnaA and in the modification of some tRNAs. It is probably a key factor in regulatory networks that act via tRNA modification, such as initiation of chromosomal replication. In Escherichia coli O45:K1 (strain S88 / ExPEC), this protein is tRNA-modifying protein YgfZ.